Here is an 817-residue protein sequence, read N- to C-terminus: Probable beta-glucosidase G (817 aa).

Positions 1-20 (MASIAHLIFSGLLAATVANS) are cleaved as a signal peptide. N-linked (GlcNAc...) asparagine glycosylation is found at asparagine 40, asparagine 58, asparagine 229, and asparagine 276. Residue aspartate 304 is part of the active site. Residues asparagine 343, asparagine 350, asparagine 402, asparagine 507, asparagine 563, asparagine 584, asparagine 623, asparagine 662, asparagine 679, and asparagine 715 are each glycosylated (N-linked (GlcNAc...) asparagine).

It belongs to the glycosyl hydrolase 3 family.

Its subcellular location is the secreted. The catalysed reaction is Hydrolysis of terminal, non-reducing beta-D-glucosyl residues with release of beta-D-glucose.. It participates in glycan metabolism; cellulose degradation. Its function is as follows. Beta-glucosidases are one of a number of cellulolytic enzymes involved in the degradation of cellulosic biomass. Catalyzes the last step releasing glucose from the inhibitory cellobiose. The sequence is that of Probable beta-glucosidase G (bglG) from Neosartorya fischeri (strain ATCC 1020 / DSM 3700 / CBS 544.65 / FGSC A1164 / JCM 1740 / NRRL 181 / WB 181) (Aspergillus fischerianus).